A 188-amino-acid chain; its full sequence is Putative protein SSX6 (188 aa).

2 disordered regions span residues 1–22 and 74–188; these read MNGDDAFAKRPRDDAKASEKRS and KRAT…EDDK. A KRAB-related domain is found at 20 to 83; the sequence is KRSKAFDDIA…KRATDSQRND (64 aa). 2 stretches are compositionally biased toward basic and acidic residues: residues 75-96 and 112-122; these read RATDSQRNDSDNDRNRGNEVER and MPEKPAEEGSD. Position 123 is a phosphoserine (Ser-123). Residues 147–156 show a composition bias toward basic and acidic residues; sequence SSEKIHERSG. Positions 157–170 are enriched in basic residues; the sequence is PKRGKHAWTHRLRE. Acidic residues predominate over residues 179-188; sequence EISDPEEDDK.

The protein belongs to the SSX family. As to expression, not detected in any normal tissues. Expressed in a melanoma cell line.

Could act as a modulator of transcription. This Homo sapiens (Human) protein is Putative protein SSX6.